The chain runs to 513 residues: ETS translocation variant 3 (513 aa).

Positions 35–116 form a DNA-binding region, ETS; it reads IQLWHFILEL…KGKRFTYKFN (82 aa). Residues 138 to 202 form a disordered region; the sequence is QSAPPVPTAS…DLEDGSASDW (65 aa). 3 positions are modified to phosphoserine: serine 139, serine 159, and serine 315. The disordered stretch occupies residues 333–513; it reads QMHPEEPSQF…ATTATAAADA (181 aa). Basic and acidic residues-rich tracts occupy residues 357–366, 380–392, and 399–419; these read ERVESREEAV, IKVE…DPDS, and GKEE…EEGK. Residue lysine 381 forms a Glycyl lysine isopeptide (Lys-Gly) (interchain with G-Cter in SUMO2) linkage. Lysine 388 is subject to N6-acetyllysine; alternate. Residue lysine 388 forms a Glycyl lysine isopeptide (Lys-Gly) (interchain with G-Cter in SUMO2); alternate linkage. A compositionally biased stretch (polar residues) spans 430–439; that stretch reads WPSVSISTPS. Residues 441–450 are compositionally biased toward acidic residues; sequence EPLEGTEDSE. Composition is skewed to basic and acidic residues over residues 451–466 and 477–489; these read DRSV…KEDA and RWND…ELNK. Residues 504 to 513 are compositionally biased toward low complexity; it reads ATTATAAADA.

Belongs to the ETS family.

It is found in the nucleus. Transcriptional repressor that contribute to growth arrest during terminal macrophage differentiation by repressing target genes involved in Ras-dependent proliferation. Represses MMP1 promoter activity. This is ETS translocation variant 3 (Etv3) from Mus musculus (Mouse).